Reading from the N-terminus, the 297-residue chain is D-alanine--D-alanine ligase (297 aa).

The ATP-grasp domain maps to 103–293 (KEILMHHRMP…FDSFVKSILE (191 aa)). 129–180 (ISFPVAVKPSSGGSSIATFKVKSLEELENAYQQASKHGEVMIEQWVTGKEIT) is an ATP binding site. The Mg(2+) site is built by Asp-247, Glu-260, and Asn-262.

It belongs to the D-alanine--D-alanine ligase family. Requires Mg(2+) as cofactor. Mn(2+) is required as a cofactor.

The protein localises to the cytoplasm. It carries out the reaction 2 D-alanine + ATP = D-alanyl-D-alanine + ADP + phosphate + H(+). Its pathway is cell wall biogenesis; peptidoglycan biosynthesis. Cell wall formation. In Francisella philomiragia subsp. philomiragia (strain ATCC 25017 / CCUG 19701 / FSC 153 / O#319-036), this protein is D-alanine--D-alanine ligase.